Reading from the N-terminus, the 160-residue chain is Large ribosomal subunit protein uL16 (160 aa).

The protein belongs to the universal ribosomal protein uL16 family. Part of the 50S ribosomal subunit.

Its function is as follows. Binds 23S rRNA and is also seen to make contacts with the A and possibly P site tRNAs. The sequence is that of Large ribosomal subunit protein uL16 from Prochlorococcus marinus (strain MIT 9515).